A 507-amino-acid polypeptide reads, in one-letter code: Glycerol kinase (507 aa).

Residue Thr-15 coordinates ADP. The ATP site is built by Thr-15, Thr-16, and Ser-17. Thr-15 contacts sn-glycerol 3-phosphate. Arg-19 contributes to the ADP binding site. 4 residues coordinate sn-glycerol 3-phosphate: Arg-85, Glu-86, Tyr-137, and Asp-250. The glycerol site is built by Arg-85, Glu-86, Tyr-137, Asp-250, and Gln-251. ADP is bound by residues Thr-272, Gly-316, and Gly-418. Positions 272, 316, and 418 each coordinate ATP.

It belongs to the FGGY kinase family.

The enzyme catalyses glycerol + ATP = sn-glycerol 3-phosphate + ADP + H(+). It functions in the pathway polyol metabolism; glycerol degradation via glycerol kinase pathway; sn-glycerol 3-phosphate from glycerol: step 1/1. With respect to regulation, inhibited by fructose 1,6-bisphosphate (FBP). Functionally, key enzyme in the regulation of glycerol uptake and metabolism. Catalyzes the phosphorylation of glycerol to yield sn-glycerol 3-phosphate. The protein is Glycerol kinase of Malacoplasma penetrans (strain HF-2) (Mycoplasma penetrans).